Reading from the N-terminus, the 250-residue chain is Tumor necrosis factor ligand superfamily member 13 (250 aa).

A propeptide spanning residues 1–104 (MPASSPFLLA…ENGERSRKRR (104 aa)) is cleaved from the precursor. Disordered stretches follow at residues 61–82 (EVSR…PWQS) and 89–108 (DALE…AVLT). The 135-residue stretch at 116-250 (SVLHLVPINA…HGTFLGFVKL (135 aa)) folds into the THD domain. Residue Asn124 is glycosylated (N-linked (GlcNAc...) asparagine). Cys196 and Cys211 are disulfide-bonded.

This sequence belongs to the tumor necrosis factor family. In terms of assembly, homotrimer. In terms of processing, the precursor is cleaved by furin. Expressed at high levels in transformed cell lines, cancers of colon, thyroid, lymphoid tissues and specifically expressed in monocytes and macrophages.

Its subcellular location is the secreted. Cytokine that binds to TNFRSF13B/TACI and to TNFRSF17/BCMA. Plays a role in the regulation of tumor cell growth. May be involved in monocyte/macrophage-mediated immunological processes. The sequence is that of Tumor necrosis factor ligand superfamily member 13 (TNFSF13) from Homo sapiens (Human).